The chain runs to 465 residues: Cysteine--tRNA ligase (465 aa).

Cys-27 provides a ligand contact to Zn(2+). Residues 29 to 39 (PTVYNFFHIGN) carry the 'HIGH' region motif. The Zn(2+) site is built by Cys-207, His-232, and Glu-236. Positions 264–268 (KMSKS) match the 'KMSKS' region motif. Lys-267 contributes to the ATP binding site.

It belongs to the class-I aminoacyl-tRNA synthetase family. Monomer. Requires Zn(2+) as cofactor.

It is found in the cytoplasm. It catalyses the reaction tRNA(Cys) + L-cysteine + ATP = L-cysteinyl-tRNA(Cys) + AMP + diphosphate. This is Cysteine--tRNA ligase from Clostridium botulinum (strain Kyoto / Type A2).